Consider the following 335-residue polypeptide: Glyceraldehyde-3-phosphate dehydrogenase (335 aa).

Residues 11–12 (TI) and G110 each bind NAD(+). Residue 139 to 141 (SCN) coordinates D-glyceraldehyde 3-phosphate. Residue C140 is the Nucleophile of the active site. R168 contacts NAD(+). 194 to 195 (HG) contributes to the D-glyceraldehyde 3-phosphate binding site. NAD(+) is bound at residue Q301.

This sequence belongs to the glyceraldehyde-3-phosphate dehydrogenase family. In terms of assembly, homotetramer.

It localises to the cytoplasm. The enzyme catalyses D-glyceraldehyde 3-phosphate + phosphate + NADP(+) = (2R)-3-phospho-glyceroyl phosphate + NADPH + H(+). The catalysed reaction is D-glyceraldehyde 3-phosphate + phosphate + NAD(+) = (2R)-3-phospho-glyceroyl phosphate + NADH + H(+). Its pathway is carbohydrate degradation; glycolysis; pyruvate from D-glyceraldehyde 3-phosphate: step 1/5. The sequence is that of Glyceraldehyde-3-phosphate dehydrogenase from Halobacterium salinarum (strain ATCC 29341 / DSM 671 / R1).